Reading from the N-terminus, the 419-residue chain is L-rhamnose isomerase (419 aa).

Mn(2+) is bound by residues His262, Asp294, and Asp296.

Belongs to the rhamnose isomerase family. Homotetramer. The cofactor is Mn(2+).

It localises to the cytoplasm. The catalysed reaction is L-rhamnopyranose = L-rhamnulose. Its pathway is carbohydrate degradation; L-rhamnose degradation; glycerone phosphate from L-rhamnose: step 1/3. In terms of biological role, catalyzes the interconversion of L-rhamnose and L-rhamnulose. The sequence is that of L-rhamnose isomerase from Shigella flexneri.